Reading from the N-terminus, the 709-residue chain is Polyribonucleotide nucleotidyltransferase (709 aa).

Positions 489 and 495 each coordinate Mg(2+). In terms of domain architecture, KH spans Pro556–Ile615. The S1 motif domain maps to Gly625–Lys693.

It belongs to the polyribonucleotide nucleotidyltransferase family. Requires Mg(2+) as cofactor.

It localises to the cytoplasm. The catalysed reaction is RNA(n+1) + phosphate = RNA(n) + a ribonucleoside 5'-diphosphate. Involved in mRNA degradation. Catalyzes the phosphorolysis of single-stranded polyribonucleotides processively in the 3'- to 5'-direction. The chain is Polyribonucleotide nucleotidyltransferase from Streptococcus agalactiae serotype III (strain NEM316).